The primary structure comprises 183 residues: uncharacterized protein (183 aa).

The chain crosses the membrane as a helical span at residues 153 to 175 (LLYVFIRLFAGCLKVFRLCILWL).

It localises to the membrane. This is an uncharacterized protein from Saccharomyces cerevisiae (strain ATCC 204508 / S288c) (Baker's yeast).